The following is a 351-amino-acid chain: Hydroxymethylglutaryl-CoA synthase (351 aa).

Asp-28 serves as a coordination point for (3S)-3-hydroxy-3-methylglutaryl-CoA. Catalysis depends on Glu-80, which acts as the Proton donor/acceptor. The (3S)-3-hydroxy-3-methylglutaryl-CoA site is built by Cys-112 and Thr-153. Cys-112 acts as the Acyl-thioester intermediate in catalysis. Arg-199 is a CoA binding site. 2 residues coordinate (3S)-3-hydroxy-3-methylglutaryl-CoA: Thr-201 and His-234. Catalysis depends on His-234, which acts as the Proton donor/acceptor. Lys-239 contributes to the CoA binding site. Arg-243, Asn-266, and Ser-296 together coordinate (3S)-3-hydroxy-3-methylglutaryl-CoA.

The protein belongs to the thiolase-like superfamily. Archaeal HMG-CoA synthase family. Interacts with acetoacetyl-CoA thiolase that catalyzes the precedent step in the pathway and with a DUF35 protein. The acetoacetyl-CoA thiolase/HMG-CoA synthase complex channels the intermediate via a fused CoA-binding site, which allows for efficient coupling of the endergonic thiolase reaction with the exergonic HMGCS reaction.

The enzyme catalyses acetoacetyl-CoA + acetyl-CoA + H2O = (3S)-3-hydroxy-3-methylglutaryl-CoA + CoA + H(+). The protein operates within metabolic intermediate biosynthesis; (R)-mevalonate biosynthesis; (R)-mevalonate from acetyl-CoA: step 2/3. Its function is as follows. Catalyzes the condensation of acetyl-CoA with acetoacetyl-CoA to form 3-hydroxy-3-methylglutaryl-CoA (HMG-CoA). Functions in the mevalonate (MVA) pathway leading to isopentenyl diphosphate (IPP), a key precursor for the biosynthesis of isoprenoid compounds that are building blocks of archaeal membrane lipids. The sequence is that of Hydroxymethylglutaryl-CoA synthase from Picrophilus torridus (strain ATCC 700027 / DSM 9790 / JCM 10055 / NBRC 100828 / KAW 2/3).